Consider the following 1378-residue polypeptide: DNA-directed RNA polymerase subunit beta (1378 aa).

The protein belongs to the RNA polymerase beta chain family. As to quaternary structure, the RNAP catalytic core consists of 2 alpha, 1 beta, 1 beta' and 1 omega subunit. When a sigma factor is associated with the core the holoenzyme is formed, which can initiate transcription.

The catalysed reaction is RNA(n) + a ribonucleoside 5'-triphosphate = RNA(n+1) + diphosphate. DNA-dependent RNA polymerase catalyzes the transcription of DNA into RNA using the four ribonucleoside triphosphates as substrates. This is DNA-directed RNA polymerase subunit beta from Campylobacter jejuni subsp. jejuni serotype O:23/36 (strain 81-176).